We begin with the raw amino-acid sequence, 662 residues long: A-kinase anchor protein 10, mitochondrial (662 aa).

Residues 1–28 (MRGAGPSPRHSPRALRPDPGPAMSFFRR) constitute a mitochondrion transit peptide. Disordered stretches follow at residues 1-55 (MRGA…SPQK), 178-205 (KQSSLAEPVSPSKRHETPASSVTEALDR), and 242-280 (GHSARSLHREVARTGSHQIPTDSQDSSSRLAVGSRNSCS). Positions 32–43 (GKEQEKTLDVKS) are enriched in basic and acidic residues. 2 positions are modified to phosphoserine: Ser52 and Ser189. 2 consecutive RGS domains span residues 125–369 (TLEQ…CKYQ) and 379–505 (YLAD…YKYL). Over residues 256 to 280 (GSHQIPTDSQDSSSRLAVGSRNSCS) the composition is skewed to polar residues. At Ser281 the chain carries Phosphoserine. Residues 634-647 (LAWKIAKMIVSDVM) are PKA-RII subunit binding.

In terms of tissue distribution, highly expressed in testis, kidney and lung, followed by brain, skeletal muscle, liver, spleen and heart. Also expressed in brown adipose tissue and pancreas.

The protein resides in the mitochondrion. The protein localises to the membrane. Its subcellular location is the cytoplasm. Its function is as follows. Differentially targeted protein that binds to type I and II regulatory subunits of protein kinase A and anchors them to the mitochondria or the plasma membrane. Although the physiological relevance between PKA and AKAPS with mitochondria is not fully understood, one idea is that BAD, a proapoptotic member, is phosphorylated and inactivated by mitochondria-anchored PKA. It cannot be excluded too that it may facilitate PKA as well as G protein signal transduction, by acting as an adapter for assembling multiprotein complexes. With its RGS domain, it could lead to the interaction to G-alpha proteins, providing a link between the signaling machinery and the downstream kinase. The polypeptide is A-kinase anchor protein 10, mitochondrial (Akap10) (Mus musculus (Mouse)).